The following is a 197-amino-acid chain: Putative sulfur carrier protein aq_1421 (197 aa).

Residue Cys-17 is the Cysteine persulfide intermediate of the active site.

Belongs to the sulfur carrier protein TusA family.

This Aquifex aeolicus (strain VF5) protein is Putative sulfur carrier protein aq_1421.